Reading from the N-terminus, the 236-residue chain is Flagellar L-ring protein (236 aa).

Positions 1-16 are cleaved as a signal peptide; that stretch reads MRMQLTAVLAASLLAG. The N-palmitoyl cysteine moiety is linked to residue cysteine 17. Residue cysteine 17 is the site of S-diacylglycerol cysteine attachment.

Belongs to the FlgH family. The basal body constitutes a major portion of the flagellar organelle and consists of four rings (L,P,S, and M) mounted on a central rod.

The protein resides in the cell outer membrane. The protein localises to the bacterial flagellum basal body. In terms of biological role, assembles around the rod to form the L-ring and probably protects the motor/basal body from shearing forces during rotation. In Sinorhizobium fredii (strain NBRC 101917 / NGR234), this protein is Flagellar L-ring protein.